Reading from the N-terminus, the 151-residue chain is uncharacterized protein (151 aa).

A coiled-coil region spans residues 35 to 147 (GIFENERQKL…RETLQESLED (113 aa)).

This is an uncharacterized protein from Helicobacter hepaticus (strain ATCC 51449 / 3B1).